The primary structure comprises 1249 residues: MRVVHLLVVLATYVSTTSSFNKESIKECAKVLSEHMKETFSKISHETILKQNYEKLVEEEQFDPRAELKKSKHRIEDYLKVRSQFAYKAKISLEARSVRNDSTVNDPQSKSFIRFMSAKQGNDGTTIYESNHLGKRLKVNETKSFNLTQNANFYTLPTSSVSSAVHIPTPLYDRNEDLLRKIDWSDIDAVYRTNREETKDLAFQLFCSEAGYMRYYPAASWFWDNQDEHLDLFDCRNTEWYINSATNSKNVLIMLDMSGSMLGQRYEVAKQTTEAILETLSHNDYFNIMTFSKNTFLLDGCNGTNGLLQATMRNKKALRRKMDTYQSEGKAEYEKALPLAFSVLLDLKGSYALYTKEEMSMMSANATNEYQFHLELPEHVLAATKQYIDSINNGGGDNNRGACENVIMLITDGAPNAYKKIFDMYNADKKVRVFTFLVGDEAIDFNEVREMACNNRGYMVHVANMADVDEKIHHYIRRMSRVVGRHYKESGQLSWWTGVYRERLYLPRPEIFAEPVPITNQSFAVMNKMASRRKIRLQKSEARSRMFVTTVSYPVIVNETFMGVAAVNIPLTEVAQKSHPANIGSKSYFFMLDQNGFVMTHPQLRPIDPFTKYHKQNYNNMDLLELEVGQNQNVRSSQKSQAVSDLVCESGANYAECVDDLRKAVRKMIIDCDNSDVQQLDVLYATELLDRVYPQTNTYYAECINHANFVLGLAVAKGDDYRVVKKQKKYDFGRVKMDWMGDKRWRLHPHWRYCFLNDTDTHMSKEEAFEIYAQQMSDSGKAPLLCEYRRNLVEKLLLDMEATSNLIDSWDTQFNFMKNNLIHLAFFATPSGMIRYYNLTLQDYDYIDPYWSIFEHIGHLLSIEHAQESYNHFITDLNRKSTDDRYYRRAVRMKDTIMFDVSNNSKIWYKSETQLTGYGLNENLTMLGQAFKAIYLDKAVLGVSGFEFAYDHVVDTMAEHGCPASDDRKWCVLLDEHAYVFFSNQNDISYEDYLVGKGKHISQYFGGLNRIAQRAMALLVENKFYTKLTYTDNQAVCKAEKVVTTSGNRLRPFYPIFRFLMQTFNFMVRLASQISGGFLIWLPNIQFTEAYTASFHEGTDVYPCPKQSSFYFSNKDGKNRPGTTHLVNGNRSERPCKMNAKCSVKMEASFVDGTNLVMVWITQDKASENCYDESECSMEISNQVPFGFEEVKNEETCEENEKRKSKANDVCYSIDDDDSENERRPCSTSPTIVSIFQILFGVFLHFCIF.

The signal sequence occupies residues 1–19 (MRVVHLLVVLATYVSTTSS). Topologically, residues 20 to 1228 (FNKESIKECA…SENERRPCST (1209 aa)) are extracellular. Residues asparagine 100, asparagine 140, asparagine 146, asparagine 302, asparagine 520, asparagine 558, asparagine 757, asparagine 838, asparagine 903, asparagine 923, and asparagine 1130 are each glycosylated (N-linked (GlcNAc...) asparagine). One can recognise a VWFA domain in the interval 250–479 (NVLIMLDMSG…EKIHHYIRRM (230 aa)). The chain crosses the membrane as a helical span at residues 1229–1248 (SPTIVSIFQILFGVFLHFCI). A topological domain (cytoplasmic) is located at residue phenylalanine 1249.

As to expression, decendants of the cells AB and AB.p (that give rise to nearly all non-pharyngeal neurons), decendants of P1 (that give rise to body muscle) and cell lineages that give rise to the adult and juvenile motor neurons. Expressed in body wall, vulval muscle and pharyngeal muscle.

The protein localises to the membrane. May act as an auxiliary subunit of the unc-2 voltage-gated calcium channel which appears to trigger calcium-activated signaling pathways that control the serotonin response. Inhibiting serotonin sensitivity of the vulval muscles results in egg laying defects. May act in both neurons and muscle cells to enhance motor activity as it is required for coordinated movement. Has a role in neural depolarization-induced calcium influx and pharyngeal pumping. Involved in restricting the expression of the putative olfactory receptor str-2 to only one of the two AWC neurons. This is Voltage-dependent calcium channel unc-36 (unc-36) from Caenorhabditis elegans.